Reading from the N-terminus, the 372-residue chain is Coxsackievirus and adenovirus receptor homolog (372 aa).

The signal sequence occupies residues methionine 1–glycine 22. 2 consecutive Ig-like C2-type domains span residues leucine 23–threonine 140 and proline 130–threonine 234. The Extracellular portion of the chain corresponds to leucine 23 to glycine 241. Disulfide bonds link cysteine 45–cysteine 124, cysteine 150–cysteine 227, and cysteine 166–cysteine 216. An N-linked (GlcNAc...) asparagine glycan is attached at asparagine 205. Residues isoleucine 242–phenylalanine 262 form a helical membrane-spanning segment. Residues cysteine 263–valine 372 lie on the Cytoplasmic side of the membrane. Residues proline 286 to leucine 352 form a disordered region. The segment covering arginine 291 to histidine 317 has biased composition (polar residues). Residues glutamate 318 to proline 336 show a composition bias toward basic and acidic residues.

Monomer. Probably homodimer formed by 2 molecules on adjacent cells.

It localises to the cell membrane. The protein localises to the basolateral cell membrane. It is found in the cell junction. Its subcellular location is the tight junction. The protein resides in the adherens junction. In terms of biological role, may function as a homophilic cell adhesion molecule and be essential for tight junction integrity. May also be involved in transepithelial migration of leukocytes through adhesive interactions with jaml. The interaction between both receptors may also mediate the activation of gamma-delta T-cells, a subpopulation of T-cells residing in epithelia and involved in tissue homeostasis and repair. This Danio rerio (Zebrafish) protein is Coxsackievirus and adenovirus receptor homolog (cxadr).